Here is a 445-residue protein sequence, read N- to C-terminus: UDP-N-acetylmuramoylalanine--D-glutamate ligase (445 aa).

Residue 110 to 116 (GSNGKTT) coordinates ATP.

The protein belongs to the MurCDEF family.

Its subcellular location is the cytoplasm. The catalysed reaction is UDP-N-acetyl-alpha-D-muramoyl-L-alanine + D-glutamate + ATP = UDP-N-acetyl-alpha-D-muramoyl-L-alanyl-D-glutamate + ADP + phosphate + H(+). Its pathway is cell wall biogenesis; peptidoglycan biosynthesis. Cell wall formation. Catalyzes the addition of glutamate to the nucleotide precursor UDP-N-acetylmuramoyl-L-alanine (UMA). This chain is UDP-N-acetylmuramoylalanine--D-glutamate ligase, found in Christiangramia forsetii (strain DSM 17595 / CGMCC 1.15422 / KT0803) (Gramella forsetii).